Consider the following 519-residue polypeptide: Anthranilate synthase component 1 (519 aa).

Residues threonine 40 and 293–295 (PYM) each bind L-tryptophan. 330–331 (GT) is a chorismate binding site. Glutamate 363 serves as a coordination point for Mg(2+). Residues tyrosine 451, arginine 471, 485 to 487 (GSG), and glycine 487 contribute to the chorismate site. Position 500 (glutamate 500) interacts with Mg(2+).

The protein belongs to the anthranilate synthase component I family. In terms of assembly, heterotetramer consisting of two non-identical subunits: a beta subunit (TrpG) and a large alpha subunit (TrpE). Mg(2+) is required as a cofactor.

It carries out the reaction chorismate + L-glutamine = anthranilate + pyruvate + L-glutamate + H(+). It participates in amino-acid biosynthesis; L-tryptophan biosynthesis; L-tryptophan from chorismate: step 1/5. Its activity is regulated as follows. Feedback inhibited by tryptophan. Functionally, part of a heterotetrameric complex that catalyzes the two-step biosynthesis of anthranilate, an intermediate in the biosynthesis of L-tryptophan. In the first step, the glutamine-binding beta subunit (TrpG) of anthranilate synthase (AS) provides the glutamine amidotransferase activity which generates ammonia as a substrate that, along with chorismate, is used in the second step, catalyzed by the large alpha subunit of AS (TrpE) to produce anthranilate. In the absence of TrpG, TrpE can synthesize anthranilate directly from chorismate and high concentrations of ammonia. This is Anthranilate synthase component 1 (trpE) from Buchnera aphidicola subsp. Diuraphis noxia.